The following is a 114-amino-acid chain: Hydrogenase maturation factor HypA (114 aa).

H2 lines the Ni(2+) pocket. Zn(2+) is bound by residues C70, C73, C86, and C89.

It belongs to the HypA/HybF family.

Functionally, involved in the maturation of [NiFe] hydrogenases. Required for nickel insertion into the metal center of the hydrogenase. This is Hydrogenase maturation factor HypA from Trichodesmium erythraeum (strain IMS101).